The following is a 158-amino-acid chain: NAD(P)H-quinone oxidoreductase subunit J, chloroplastic (158 aa).

It belongs to the complex I 30 kDa subunit family. NDH is composed of at least 16 different subunits, 5 of which are encoded in the nucleus.

Its subcellular location is the plastid. The protein resides in the chloroplast thylakoid membrane. The enzyme catalyses a plastoquinone + NADH + (n+1) H(+)(in) = a plastoquinol + NAD(+) + n H(+)(out). It catalyses the reaction a plastoquinone + NADPH + (n+1) H(+)(in) = a plastoquinol + NADP(+) + n H(+)(out). Functionally, NDH shuttles electrons from NAD(P)H:plastoquinone, via FMN and iron-sulfur (Fe-S) centers, to quinones in the photosynthetic chain and possibly in a chloroplast respiratory chain. The immediate electron acceptor for the enzyme in this species is believed to be plastoquinone. Couples the redox reaction to proton translocation, and thus conserves the redox energy in a proton gradient. The sequence is that of NAD(P)H-quinone oxidoreductase subunit J, chloroplastic from Liriodendron tulipifera (Tuliptree).